The sequence spans 390 residues: Protein YghO (390 aa).

This Escherichia coli (strain K12) protein is Protein YghO (yghO).